A 405-amino-acid polypeptide reads, in one-letter code: L-carnitine CoA-transferase (405 aa).

Positions 97 and 104 each coordinate CoA. The active-site Nucleophile is Asp169.

Belongs to the CoA-transferase III family. CaiB subfamily. Homodimer.

Its subcellular location is the cytoplasm. The catalysed reaction is crotonobetainyl-CoA + (R)-carnitine = crotonobetaine + (R)-carnitinyl-CoA. It carries out the reaction 4-(trimethylamino)butanoyl-CoA + (R)-carnitine = (R)-carnitinyl-CoA + 4-(trimethylamino)butanoate. It functions in the pathway amine and polyamine metabolism; carnitine metabolism. Its function is as follows. Catalyzes the reversible transfer of the CoA moiety from gamma-butyrobetainyl-CoA to L-carnitine to generate L-carnitinyl-CoA and gamma-butyrobetaine. Is also able to catalyze the reversible transfer of the CoA moiety from gamma-butyrobetainyl-CoA or L-carnitinyl-CoA to crotonobetaine to generate crotonobetainyl-CoA. The protein is L-carnitine CoA-transferase of Escherichia coli (strain 55989 / EAEC).